The chain runs to 423 residues: COP9 signalosome complex subunit 3 (423 aa).

A PCI domain is found at 197–365 (NFERAMYFYE…GMVCFHDSPE (169 aa)). Residues 401–410 (PQFVQKSMGS) are compositionally biased toward polar residues. Positions 401–423 (PQFVQKSMGSQEDDSGSKPSSYS) are disordered.

This sequence belongs to the CSN3 family. Component of the CSN complex, probably composed of cops1, cops2, cops3, cops4, cops5, cops6, cops7, cops8 and cops9.

The protein resides in the cytoplasm. It localises to the nucleus. In terms of biological role, component of the COP9 signalosome complex (CSN), a complex involved in various cellular and developmental processes. The CSN complex is an essential regulator of the ubiquitin (Ubl) conjugation pathway by mediating the deneddylation of the cullin subunits of E3 ligase complexes, leading to modify the Ubl ligase activity. The polypeptide is COP9 signalosome complex subunit 3 (cops3) (Xenopus laevis (African clawed frog)).